Consider the following 360-residue polypeptide: Photosystem II protein D1 (360 aa).

A run of 3 helical transmembrane segments spans residues 29–46, 118–133, and 142–156; these read YVGW…TATT, QFLI…QWEL, and WICV…ARTA. Y126 is a binding site for pheophytin a. [CaMn4O5] cluster-binding residues include D170 and E189. Residues 197–218 traverse the membrane as a helical segment; sequence FHMLGVAGVFGGSLFSAMHGSL. Position 198 (H198) interacts with chlorophyll a. A quinone contacts are provided by residues H215 and 264 to 265; that span reads SF. H215 provides a ligand contact to Fe cation. H272 contacts Fe cation. Residues 274–288 traverse the membrane as a helical segment; that stretch reads FLGAWPVIGIWFTAM. [CaMn4O5] cluster-binding residues include H332, E333, D342, and A344. Positions 345-360 are excised as a propeptide; it reads SGEQAPVALTAPAING.

This sequence belongs to the reaction center PufL/M/PsbA/D family. In terms of assembly, PSII is composed of 1 copy each of membrane proteins PsbA, PsbB, PsbC, PsbD, PsbE, PsbF, PsbH, PsbI, PsbJ, PsbK, PsbL, PsbM, PsbT, PsbX, PsbY, PsbZ, Psb30/Ycf12, peripheral proteins PsbO, CyanoQ (PsbQ), PsbU, PsbV and a large number of cofactors. It forms dimeric complexes. The D1/D2 heterodimer binds P680, chlorophylls that are the primary electron donor of PSII, and subsequent electron acceptors. It shares a non-heme iron and each subunit binds pheophytin, quinone, additional chlorophylls, carotenoids and lipids. D1 provides most of the ligands for the Mn4-Ca-O5 cluster of the oxygen-evolving complex (OEC). There is also a Cl(-1) ion associated with D1 and D2, which is required for oxygen evolution. The PSII complex binds additional chlorophylls, carotenoids and specific lipids. serves as cofactor. In terms of processing, tyr-161 forms a radical intermediate that is referred to as redox-active TyrZ, YZ or Y-Z. Post-translationally, C-terminally processed by CtpA; processing is essential to allow assembly of the oxygen-evolving complex and thus photosynthetic growth.

Its subcellular location is the cellular thylakoid membrane. The enzyme catalyses 2 a plastoquinone + 4 hnu + 2 H2O = 2 a plastoquinol + O2. Functionally, photosystem II (PSII) is a light-driven water:plastoquinone oxidoreductase that uses light energy to abstract electrons from H(2)O, generating O(2) and a proton gradient subsequently used for ATP formation. It consists of a core antenna complex that captures photons, and an electron transfer chain that converts photonic excitation into a charge separation. The D1/D2 (PsbA/PsbD) reaction center heterodimer binds P680, the primary electron donor of PSII as well as several subsequent electron acceptors. This Synechocystis sp. (strain PCC 6714) (Aphanocapsa sp. (strain PCC 6714)) protein is Photosystem II protein D1.